The following is a 185-amino-acid chain: Large ribosomal subunit protein uL22 (185 aa).

The disordered stretch occupies residues 158–185 (AKPREDEPHKKKISKKKLARAKEKMLRE). The segment covering 167-176 (KKKISKKKLA) has biased composition (basic residues).

This sequence belongs to the universal ribosomal protein uL22 family.

The chain is Large ribosomal subunit protein uL22 (RpL17) from Diaphorina citri (Asian citrus psyllid).